The sequence spans 1207 residues: MVLAAAMSQDADPSGPEQPDRDACIVPGVQGPPAPQGQQGMQPLPPPLPPPPQPQSSLPQIIQNAAKLLDKNPFSVSSQNPLLTSPASVQLAQIQAQLTLHRLKMAQTAVTNNTAAATVLNQVLSKVAMSQPLFNQLRHPSVLGTTHGPTGVSQHAATVPSAHFPSTAIAFSPPSQAGGPGPSVSLPSQPPNAMVVHTFSGVVPQTPAQPAVILSIGKAGPTPATTGFYDYGKANPGQAYGSETEGQPGFLPASASAAASGGVTYEGHYSHTGQDGQATFSKDFYGPSAQGSHAAGGFPADQAGSMKGDVGGLLQGTNSQWERPSGFSGQNKADITAGPGLWAPPASQPYELYDPEEPTSDRAPPAFGSRLNNSKQGFNCSCRRTKEGQAMLSVRPLQGHQLNDFRGLAPLHLPHICSICDKKVFDLKDWELHVKGKLHAQKCLLFSESAGLRSICATGEGTLSASANSTAVYNPTGNEDYTSTLGTSYAAIPTRAFAQSNPMFPSASSGTNFAQRKGAGRVVHICNLPEGSCTENDVINLGLPFGKVTNYILMKSTNQAFLEMAYTEAAQAMVQYYQEKPALINGEKLLIRMSTRYKELQLKKPGKNVAAIIQDIHSQRERCMLREADRYGPERPRSRSPMSRSLSPRSHSPPGPSRADWGNGRDSYAWRDEDRETVPRRENGEDKRDRLDVWAHDRKHYPRQLDKAELDERLEGGRGYREKYLKSGSPGPLHSASGYKGREDGYHRKETKAKLDKHPKQQQQDVPGRSRRKEEARLREPRHPHPEDSGKEEDLEPKVTRAPEGTKSKQSEKSKTKRADRDQEGADDKKEGRGAENEAGTEEQEGMEESPASVGTQQEGTESSDPENTRTKKGQDCDSGSEPEGDNWYPTNMEELVTVDEVGEEDFIMEPDIPELEEIVPIDQKDKILPEICPCVTATLGLDLAKDFTKQGETLGNGDAELSPKLPGQVPSTSTSCPNDTDMEMAGLNLDAERKPAESETGLSPEVSNCYEKEARGAEGSDVRLAPAAQRMSSPQPADERAQQSSPFLDDCKARGSPEDGPHEVSPLEEKASPTTESDLQSQACQENSRYTETRSLNSRSPEFTEAELKEPLSLPSWEPEVFSELSIPLGVEFVVPRTGFYCKLCGLFYTSEEAAKVSHCRSTVHYRNLQKYLSQLAEEGLKETEGVDSPSPERSGIGPHLERKKL.

Residues 1–58 (MVLAAAMSQDADPSGPEQPDRDACIVPGVQGPPAPQGQQGMQPLPPPLPPPPQPQSSL) form a disordered region. The span at 43–54 (PLPPPLPPPPQP) shows a compositional bias: pro residues. A U1-type zinc finger spans residues 412-446 (HLPHICSICDKKVFDLKDWELHVKGKLHAQKCLLF). The RRM domain maps to 521–596 (RVVHICNLPE…EKLLIRMSTR (76 aa)). The segment covering 625 to 637 (LREADRYGPERPR) has biased composition (basic and acidic residues). Disordered stretches follow at residues 625 to 686 (LREA…NGED), 722 to 896 (EKYL…MEEL), and 951 to 1110 (QGET…AELK). The segment at 631 to 650 (YGPERPRSRSPMSRSLSPRS) is RS. Residues Ser-638, Ser-640, Ser-643, Ser-645, and Ser-652 each carry the phosphoserine modification. The segment covering 639–650 (RSPMSRSLSPRS) has biased composition (low complexity). Residues 668 to 686 (YAWRDEDRETVPRRENGED) are compositionally biased toward basic and acidic residues. A Phosphoserine modification is found at Ser-729. Composition is skewed to basic and acidic residues over residues 740 to 759 (KGREDGYHRKETKAKLDKHP), 772 to 789 (RKEEARLREPRHPHPEDS), and 796 to 836 (EPKV…RGAE). Ser-789 carries the post-translational modification Phosphoserine. Residues 839–848 (AGTEEQEGME) are compositionally biased toward acidic residues. Ser-853 and Ser-864 each carry phosphoserine. The span at 853–863 (SVGTQQEGTES) shows a compositional bias: polar residues. A compositionally biased stretch (basic and acidic residues) spans 867–876 (ENTRTKKGQD). Phosphoserine occurs at positions 879, 881, and 963. Over residues 970 to 979 (VPSTSTSCPN) the composition is skewed to polar residues. Residue Ser-999 is modified to Phosphoserine. The segment covering 1011-1022 (YEKEARGAEGSD) has biased composition (basic and acidic residues). A phosphoserine mark is found at Ser-1034, Ser-1046, Ser-1057, Ser-1066, Ser-1078, Ser-1096, and Ser-1101. Residues 1050–1072 (DDCKARGSPEDGPHEVSPLEEKA) show a composition bias toward basic and acidic residues. Positions 1073–1102 (SPTTESDLQSQACQENSRYTETRSLNSRSP) are enriched in polar residues. A Matrin-type zinc finger spans residues 1141 to 1172 (FYCKLCGLFYTSEEAAKVSHCRSTVHYRNLQK). Residues 1181–1207 (GLKETEGVDSPSPERSGIGPHLERKKL) form a disordered region. 2 positions are modified to phosphoserine: Ser-1190 and Ser-1192.

Associates with components of the U1 and U2 U1 small nuclear ribonucleoprotein complexes. In terms of processing, phosphorylation regulates the subcellular localization. Phosphorylation of Ser-638 and Ser-640 in the RS (arginine/serine-rich) region promotes nuclear localization of the protein. In contrast, phosphorylation of the C-terminal disordered region promotes localization to cytoplasmic ribonucleoprotein granules.

The protein localises to the nucleus. Its subcellular location is the cytoplasm. It is found in the cytoplasmic ribonucleoprotein granule. Its function is as follows. RNA-binding protein that acts as a regulator of mRNA splicing of a subset of genes encoding key structural proteins involved in cardiac development, such as TTN (Titin), CACNA1C, CAMK2D or PDLIM5/ENH. Acts as a repressor of mRNA splicing: specifically binds the 5'UCUU-3' motif that is predominantly found within intronic sequences of pre-mRNAs, leading to the exclusion of specific exons in target transcripts. RBM20-mediated exon skipping is hormone-dependent and is essential for TTN isoform transition in both cardiac and skeletal muscles. RBM20-mediated exon skipping of TTN provides substrates for the formation of circular RNA (circRNAs) from the TTN transcripts. Together with RBM24, promotes the expression of short isoforms of PDLIM5/ENH in cardiomyocytes. The chain is RNA-binding protein 20 from Rattus norvegicus (Rat).